Here is a 526-residue protein sequence, read N- to C-terminus: Carotenoid cleavage oxygenase 1 (526 aa).

The interval 1-33 (MAEYVFSDAPKDSHGNGVKDAVPGKQPEELPPA) is disordered. Piceatannol-binding residues include tyrosine 133 and lysine 164. Trans-resveratrol-binding residues include tyrosine 133 and lysine 164. The Fe cation site is built by histidine 197, histidine 248, and histidine 313. Glutamate 383 contacts piceatannol. Trans-resveratrol is bound at residue glutamate 383. Histidine 510 provides a ligand contact to Fe cation.

It belongs to the carotenoid oxygenase family. Fe(2+) serves as cofactor.

It carries out the reaction trans-resveratrol + O2 = 3,5-dihydroxybenzaldehyde + 4-hydroxybenzaldehyde. It catalyses the reaction piceatannol + O2 = 3,5-dihydroxybenzaldehyde + 3,4-dihydroxybenzaldehyde. In terms of biological role, dioxygenase that cleaves the interphenyl C-alpha-C-beta double bond of resveratrol to yield 3,5-dihydroxybenzaldehyde and 4-hydroxybenzaldehyde. Also cleaves piceatannol, a compound that differs from resveratrol only in the occurrence of an additional hydroxyl group, which leads to the production of 3,4-dihydroxybenzaldehyde and 3,5-hydroxybenzaldehyde. Is not able to cleave trans-stilbene, 4-monohydroxy-trans-stilbene, 3,5-dihydroxy-trans-stilbene (pinosylvin), trismethoxy-resveratrol, and 3,3',5-trihydroxy-4'-methoxystilbene-3-O-beta-D-glucoside. Is not involved in carotenoid metabolism. The polypeptide is Carotenoid cleavage oxygenase 1 (Neurospora crassa (strain ATCC 24698 / 74-OR23-1A / CBS 708.71 / DSM 1257 / FGSC 987)).